Reading from the N-terminus, the 261-residue chain is NAD kinase (261 aa).

Residue D54 is the Proton acceptor of the active site. NAD(+) contacts are provided by residues D54–G55, N123–D124, R150, D152, and T163–S168.

It belongs to the NAD kinase family. A divalent metal cation serves as cofactor.

The protein resides in the cytoplasm. The enzyme catalyses NAD(+) + ATP = ADP + NADP(+) + H(+). Functionally, involved in the regulation of the intracellular balance of NAD and NADP, and is a key enzyme in the biosynthesis of NADP. Catalyzes specifically the phosphorylation on 2'-hydroxyl of the adenosine moiety of NAD to yield NADP. In Caldicellulosiruptor bescii (strain ATCC BAA-1888 / DSM 6725 / KCTC 15123 / Z-1320) (Anaerocellum thermophilum), this protein is NAD kinase.